The following is a 320-amino-acid chain: tRNA pseudouridine synthase B (320 aa).

Asp-41 (nucleophile) is an active-site residue. Disordered regions lie at residues 116–136 (PPQV…ARRG) and 259–284 (DQCQ…DPSA). The span at 125–136 (QGERAHARARRG) shows a compositional bias: basic and acidic residues. Over residues 270 to 284 (SDQQESAPNQTDPSA) the composition is skewed to polar residues.

Belongs to the pseudouridine synthase TruB family. Type 1 subfamily.

It carries out the reaction uridine(55) in tRNA = pseudouridine(55) in tRNA. In terms of biological role, responsible for synthesis of pseudouridine from uracil-55 in the psi GC loop of transfer RNAs. The chain is tRNA pseudouridine synthase B from Prochlorococcus marinus (strain MIT 9313).